Consider the following 216-residue polypeptide: Phosphatidylserine decarboxylase proenzyme (216 aa).

Ser-183 (schiff-base intermediate with substrate; via pyruvic acid) is an active-site residue. A Pyruvic acid (Ser); by autocatalysis modification is found at Ser-183.

The protein belongs to the phosphatidylserine decarboxylase family. PSD-A subfamily. In terms of assembly, heterodimer of a large membrane-associated beta subunit and a small pyruvoyl-containing alpha subunit. Pyruvate serves as cofactor. In terms of processing, is synthesized initially as an inactive proenzyme. Formation of the active enzyme involves a self-maturation process in which the active site pyruvoyl group is generated from an internal serine residue via an autocatalytic post-translational modification. Two non-identical subunits are generated from the proenzyme in this reaction, and the pyruvate is formed at the N-terminus of the alpha chain, which is derived from the carboxyl end of the proenzyme. The post-translation cleavage follows an unusual pathway, termed non-hydrolytic serinolysis, in which the side chain hydroxyl group of the serine supplies its oxygen atom to form the C-terminus of the beta chain, while the remainder of the serine residue undergoes an oxidative deamination to produce ammonia and the pyruvoyl prosthetic group on the alpha chain.

It localises to the cell membrane. The catalysed reaction is a 1,2-diacyl-sn-glycero-3-phospho-L-serine + H(+) = a 1,2-diacyl-sn-glycero-3-phosphoethanolamine + CO2. The protein operates within phospholipid metabolism; phosphatidylethanolamine biosynthesis; phosphatidylethanolamine from CDP-diacylglycerol: step 2/2. In terms of biological role, catalyzes the formation of phosphatidylethanolamine (PtdEtn) from phosphatidylserine (PtdSer). The sequence is that of Phosphatidylserine decarboxylase proenzyme from Cupriavidus taiwanensis (strain DSM 17343 / BCRC 17206 / CCUG 44338 / CIP 107171 / LMG 19424 / R1) (Ralstonia taiwanensis (strain LMG 19424)).